The chain runs to 1088 residues: DEAD-box ATP-dependent RNA helicase 40 (1088 aa).

Disordered regions lie at residues 1–28 (MATT…PWKG), 47–178 (TQYE…QYAH), and 192–254 (TQGL…QNTH). A2 bears the N-acetylalanine mark. A WW domain is found at 20-54 (PTLPQPWKGLIDGSTGILYYWNPETNVTQYERPSA). Composition is skewed to low complexity over residues 87-137 (VGHV…SQSM), 148-171 (QTYQ…MPQQ), and 200-215 (QTPQ…PSQQ). Positions 222–231 (PKREGDEFHG) are enriched in basic and acidic residues. The span at 236–254 (GFSQPHLPNSERSPSQNTH) shows a compositional bias: polar residues. Positions 435–463 (ITFESSGLPPEILRELLSAGFPSPTPIQA) match the Q motif motif. The Helicase ATP-binding domain occupies 466 to 640 (WPIALQSRDI…SDLLVNPVQV (175 aa)). 479-486 (AKTGSGKT) serves as a coordination point for ATP. The DEAD box motif lies at 588–591 (DEAD). The Helicase C-terminal domain occupies 669-813 (RLEQILRSQE…QVPPQVRDIA (145 aa)). Gly residues-rich tracts occupy residues 861-885 (EGGF…GGRF), 893-902 (GRGGNRGRGF), 911-920 (NVGGRGGFGR), and 932-944 (FGRG…GRGV). Residues 861-1033 (EGGFGGREGG…RRDRAPRVSG (173 aa)) form a disordered region. Basic and acidic residues predominate over residues 945 to 963 (GRFDNRRGRSRSRSPDLVR). Over residues 969-983 (SSYSRSRSRSGSYSR) the composition is skewed to low complexity. Residues 984 to 1013 (SRSRSRSWSRSRSRSPRHSRDRGGHNRSRS) show a composition bias toward basic residues.

The protein belongs to the DEAD box helicase family. DDX5/DBP2 subfamily.

It localises to the nucleus. It carries out the reaction ATP + H2O = ADP + phosphate + H(+). ATP-dependent RNA helicase involved nonsense-mediated mRNA decay and ribosome biogenesis through rRNA processing. This is DEAD-box ATP-dependent RNA helicase 40 (RH40) from Arabidopsis thaliana (Mouse-ear cress).